Reading from the N-terminus, the 420-residue chain is Protein-lysine N-trimethyltransferase SMYD5 (420 aa).

The 330-residue stretch at 29-358 folds into the SET domain; sequence AEARFISSAK…AGEEICISYL (330 aa). The MYND-type zinc finger occupies 104-142; the sequence is PEQCSIRKDLHQQCPRCQVTYCSAECRQAALEQYHQVLC. Tyrosine 357 is a binding site for S-adenosyl-L-methionine. The interval 392–420 is disordered; it reads DDPDVTSDEEEEAEGETDDAELEDEMTDV.

It belongs to the class V-like SAM-binding methyltransferase superfamily.

The protein resides in the cytoplasm. It carries out the reaction L-lysyl-[protein] + 3 S-adenosyl-L-methionine = N(6),N(6),N(6)-trimethyl-L-lysyl-[protein] + 3 S-adenosyl-L-homocysteine + 3 H(+). The enzyme catalyses L-lysyl(20)-[histone H4] + 3 S-adenosyl-L-methionine = N(6),N(6),N(6)-trimethyl-L-lysyl(20)-[histone H4] + 3 S-adenosyl-L-homocysteine + 3 H(+). The catalysed reaction is L-lysyl(36)-[histone H3] + 3 S-adenosyl-L-methionine = N(6),N(6),N(6)-trimethyl-L-lysyl(36)-[histone H3] + 3 S-adenosyl-L-homocysteine + 3 H(+). Its function is as follows. Protein-lysine N-trimethyltransferase that specifically catalyzes trimethylation of 'Lys-22' of the RPL40/eL40 subunit of the 60S ribosome, thereby promoting translation elongation and protein synthesis. May also act as a histone methyltransferase in the context of histone octamers, but not on nucleosome substrates: trimethylates 'Lys-36' of histone H3 and 'Lys-20' of histone H4 to form H3K36me3 and H4K20me3, respectively. The histone methyltransferase activity, which is independent of its SET domain, is however unsure in vivo. This chain is Protein-lysine N-trimethyltransferase SMYD5 (SMYD5), found in Gallus gallus (Chicken).